Consider the following 360-residue polypeptide: MLVWLAEHLVKYYSGFNVFSYLTFRAIVSLLTALFISLWMGPRMIAHLQKLSFGQVVRNDGPESHFSKRGTPTMGGIMILTAIVISVLLWAYPSNPYVWCVLVVLVGYGVIGFVDDYRKVVRKDTKGLIARWKYFWMSVIALGVAFALYLAGKDTPATQLVVPFFKDVMPQLGLFYILLAYFVIVGTGNAVNLTDGLDGLAIMPTVFVAGGFALVAWATGNMNFASYLHIPYLRHAGELVIVCTAIVGAGLGFLWFNTYPAQVFMGDVGSLALGGALGIIAVLLRQEFLLVIMGGVFVVETLSVILQVGSFKLRGQRIFRMAPIHHHYELKGWPEPRVIVRFWIISLMLVLIGLATLKVR.

At 1–25 the chain is on the periplasmic side; the sequence is MLVWLAEHLVKYYSGFNVFSYLTFR. The chain crosses the membrane as a helical span at residues 26–46; sequence AIVSLLTALFISLWMGPRMIA. Residues 47–71 lie on the Cytoplasmic side of the membrane; sequence HLQKLSFGQVVRNDGPESHFSKRGT. The helical transmembrane segment at 72 to 92 threads the bilayer; the sequence is PTMGGIMILTAIVISVLLWAY. Proline 93 is a topological domain (periplasmic). The helical transmembrane segment at 94–114 threads the bilayer; that stretch reads SNPYVWCVLVVLVGYGVIGFV. Residues 115–131 are Cytoplasmic-facing; sequence DDYRKVVRKDTKGLIAR. A helical membrane pass occupies residues 132–152; it reads WKYFWMSVIALGVAFALYLAG. The Periplasmic segment spans residues 153–167; that stretch reads KDTPATQLVVPFFKD. Residues 168 to 188 traverse the membrane as a helical segment; the sequence is VMPQLGLFYILLAYFVIVGTG. At 189–198 the chain is on the cytoplasmic side; it reads NAVNLTDGLD. Residues 199 to 219 traverse the membrane as a helical segment; it reads GLAIMPTVFVAGGFALVAWAT. Residues 220 to 235 are Periplasmic-facing; that stretch reads GNMNFASYLHIPYLRH. Residues 236 to 256 traverse the membrane as a helical segment; the sequence is AGELVIVCTAIVGAGLGFLWF. The Cytoplasmic segment spans residues 257-262; that stretch reads NTYPAQ. Residues 263–283 traverse the membrane as a helical segment; that stretch reads VFMGDVGSLALGGALGIIAVL. The Periplasmic portion of the chain corresponds to 284–287; that stretch reads LRQE. A helical transmembrane segment spans residues 288–308; sequence FLLVIMGGVFVVETLSVILQV. Residues 309 to 337 are Cytoplasmic-facing; sequence GSFKLRGQRIFRMAPIHHHYELKGWPEPR. Residues 338–358 form a helical membrane-spanning segment; the sequence is VIVRFWIISLMLVLIGLATLK. The Periplasmic segment spans residues 359–360; it reads VR.

It belongs to the glycosyltransferase 4 family. MraY subfamily. It depends on Mg(2+) as a cofactor.

The protein localises to the cell inner membrane. The catalysed reaction is UDP-N-acetyl-alpha-D-muramoyl-L-alanyl-gamma-D-glutamyl-meso-2,6-diaminopimeloyl-D-alanyl-D-alanine + di-trans,octa-cis-undecaprenyl phosphate = di-trans,octa-cis-undecaprenyl diphospho-N-acetyl-alpha-D-muramoyl-L-alanyl-D-glutamyl-meso-2,6-diaminopimeloyl-D-alanyl-D-alanine + UMP. It participates in cell wall biogenesis; peptidoglycan biosynthesis. In terms of biological role, catalyzes the initial step of the lipid cycle reactions in the biosynthesis of the cell wall peptidoglycan: transfers peptidoglycan precursor phospho-MurNAc-pentapeptide from UDP-MurNAc-pentapeptide onto the lipid carrier undecaprenyl phosphate, yielding undecaprenyl-pyrophosphoryl-MurNAc-pentapeptide, known as lipid I. The chain is Phospho-N-acetylmuramoyl-pentapeptide-transferase from Shigella boydii serotype 18 (strain CDC 3083-94 / BS512).